A 287-amino-acid polypeptide reads, in one-letter code: Lectin 10 (287 aa).

At 1–11 (MALSNLKSNRT) the chain is on the cytoplasmic side. The chain crosses the membrane as a helical span at residues 12–31 (LSSSLITIFIISLFLQYHNI). The Extracellular portion of the chain corresponds to 32–287 (KSQSSWQSRQ…IINWSFESAL (256 aa)). N-linked (GlcNAc...) asparagine glycosylation is found at Asn-124, Asn-147, Asn-243, and Asn-280.

This sequence belongs to the leguminous lectin family.

It localises to the membrane. Its function is as follows. May be involved in arbuscular mycorrhizal (AM) symbiosis with AM fungi. This Medicago truncatula (Barrel medic) protein is Lectin 10.